An 87-amino-acid chain; its full sequence is Small ribosomal subunit protein bS20 (87 aa).

Belongs to the bacterial ribosomal protein bS20 family.

Binds directly to 16S ribosomal RNA. The protein is Small ribosomal subunit protein bS20 of Clostridium botulinum (strain Alaska E43 / Type E3).